The following is a 377-amino-acid chain: Queuine tRNA-ribosyltransferase (377 aa).

Catalysis depends on aspartate 89, which acts as the Proton acceptor. Substrate is bound by residues 89-93 (DSGGF), aspartate 143, glutamine 187, and glycine 214. The RNA binding stretch occupies residues 245 to 251 (GVGKPED). Aspartate 264 acts as the Nucleophile in catalysis. Residues 269–273 (TRNAR) are RNA binding; important for wobble base 34 recognition. Zn(2+) contacts are provided by cysteine 302, cysteine 304, cysteine 307, and histidine 333.

Belongs to the queuine tRNA-ribosyltransferase family. Homodimer. Within each dimer, one monomer is responsible for RNA recognition and catalysis, while the other monomer binds to the replacement base PreQ1. It depends on Zn(2+) as a cofactor.

It carries out the reaction 7-aminomethyl-7-carbaguanine + guanosine(34) in tRNA = 7-aminomethyl-7-carbaguanosine(34) in tRNA + guanine. It functions in the pathway tRNA modification; tRNA-queuosine biosynthesis. Functionally, catalyzes the base-exchange of a guanine (G) residue with the queuine precursor 7-aminomethyl-7-deazaguanine (PreQ1) at position 34 (anticodon wobble position) in tRNAs with GU(N) anticodons (tRNA-Asp, -Asn, -His and -Tyr). Catalysis occurs through a double-displacement mechanism. The nucleophile active site attacks the C1' of nucleotide 34 to detach the guanine base from the RNA, forming a covalent enzyme-RNA intermediate. The proton acceptor active site deprotonates the incoming PreQ1, allowing a nucleophilic attack on the C1' of the ribose to form the product. After dissociation, two additional enzymatic reactions on the tRNA convert PreQ1 to queuine (Q), resulting in the hypermodified nucleoside queuosine (7-(((4,5-cis-dihydroxy-2-cyclopenten-1-yl)amino)methyl)-7-deazaguanosine). The polypeptide is Queuine tRNA-ribosyltransferase (Shewanella sediminis (strain HAW-EB3)).